The following is a 488-amino-acid chain: Glutamyl-tRNA(Gln) amidotransferase subunit A (488 aa).

Active-site charge relay system residues include K77 and S152. Residue S176 is the Acyl-ester intermediate of the active site.

It belongs to the amidase family. GatA subfamily. In terms of assembly, heterotrimer of A, B and C subunits.

It catalyses the reaction L-glutamyl-tRNA(Gln) + L-glutamine + ATP + H2O = L-glutaminyl-tRNA(Gln) + L-glutamate + ADP + phosphate + H(+). In terms of biological role, allows the formation of correctly charged Gln-tRNA(Gln) through the transamidation of misacylated Glu-tRNA(Gln) in organisms which lack glutaminyl-tRNA synthetase. The reaction takes place in the presence of glutamine and ATP through an activated gamma-phospho-Glu-tRNA(Gln). The sequence is that of Glutamyl-tRNA(Gln) amidotransferase subunit A from Streptococcus pyogenes serotype M5 (strain Manfredo).